Reading from the N-terminus, the 194-residue chain is Translationally-controlled tumor protein homolog 2 (194 aa).

Positions 1–194 constitute a TCTP domain; that stretch reads MKLYKDLIGN…IKYGLLQVDV (194 aa).

Belongs to the TCTP family.

The protein resides in the cytoplasm. Involved in calcium binding and microtubule stabilization. This chain is Translationally-controlled tumor protein homolog 2, found in Dictyostelium discoideum (Social amoeba).